Reading from the N-terminus, the 123-residue chain is Small ribosomal subunit protein uS12c (123 aa).

Belongs to the universal ribosomal protein uS12 family. As to quaternary structure, part of the 30S ribosomal subunit.

The protein localises to the plastid. It is found in the chloroplast. Its function is as follows. With S4 and S5 plays an important role in translational accuracy. Located at the interface of the 30S and 50S subunits. In Anthoceros angustus (Hornwort), this protein is Small ribosomal subunit protein uS12c (rps12).